The following is a 494-amino-acid chain: Glutamate decarboxylase 2 (494 aa).

Position 276 is an N6-(pyridoxal phosphate)lysine (Lys-276). Residues 463–494 form a calmodulin-binding region; that stretch reads VKEKKMEKEILMEVIVGWRKFVKERKKMNGVC.

Belongs to the group II decarboxylase family. As to quaternary structure, homohexamer. Interacts with calmodulin. Pyridoxal 5'-phosphate is required as a cofactor. In terms of tissue distribution, expressed in roots, inflorescence stems, flowers, siliques and leaves.

It carries out the reaction L-glutamate + H(+) = 4-aminobutanoate + CO2. Its activity is regulated as follows. Up-regulated by calmodulin binding at physiological pH. Its function is as follows. Catalyzes the conversion of glutamate to 4-aminobutanoate (GABA). The calmodulin-binding is calcium-dependent and it is proposed to directly or indirectly form a calcium regulated control of GABA biosynthesis. The sequence is that of Glutamate decarboxylase 2 (GAD2) from Arabidopsis thaliana (Mouse-ear cress).